Reading from the N-terminus, the 190-residue chain is NADH-quinone oxidoreductase subunit B (190 aa).

Residues C39, C40, C104, and C135 each contribute to the [4Fe-4S] cluster site.

The protein belongs to the complex I 20 kDa subunit family. As to quaternary structure, NDH-1 is composed of 14 different subunits. Subunits NuoB, C, D, E, F, and G constitute the peripheral sector of the complex. Requires [4Fe-4S] cluster as cofactor.

The protein resides in the cell inner membrane. It catalyses the reaction a quinone + NADH + 5 H(+)(in) = a quinol + NAD(+) + 4 H(+)(out). Its function is as follows. NDH-1 shuttles electrons from NADH, via FMN and iron-sulfur (Fe-S) centers, to quinones in the respiratory chain. The immediate electron acceptor for the enzyme in this species is believed to be a menaquinone. Couples the redox reaction to proton translocation (for every two electrons transferred, four hydrogen ions are translocated across the cytoplasmic membrane), and thus conserves the redox energy in a proton gradient. The chain is NADH-quinone oxidoreductase subunit B from Prosthecochloris aestuarii (strain DSM 271 / SK 413).